A 111-amino-acid polypeptide reads, in one-letter code: Small ribosomal subunit protein bS16 (111 aa).

The interval 92-111 (MEVKAKNRKARPSKKEDKEA) is disordered.

The protein belongs to the bacterial ribosomal protein bS16 family.

The protein is Small ribosomal subunit protein bS16 of Rickettsia massiliae (strain Mtu5).